Consider the following 126-residue polypeptide: Holo-[acyl-carrier-protein] synthase (126 aa).

Residues aspartate 9 and glutamate 58 each coordinate Mg(2+).

It belongs to the P-Pant transferase superfamily. AcpS family. Mg(2+) serves as cofactor.

The protein resides in the cytoplasm. The enzyme catalyses apo-[ACP] + CoA = holo-[ACP] + adenosine 3',5'-bisphosphate + H(+). Its function is as follows. Transfers the 4'-phosphopantetheine moiety from coenzyme A to a Ser of acyl-carrier-protein. The sequence is that of Holo-[acyl-carrier-protein] synthase from Photobacterium profundum (strain SS9).